The chain runs to 267 residues: Tryptophan synthase alpha chain (267 aa).

Residues glutamate 47 and aspartate 58 each act as proton acceptor in the active site.

It belongs to the TrpA family. Tetramer of two alpha and two beta chains.

The enzyme catalyses (1S,2R)-1-C-(indol-3-yl)glycerol 3-phosphate + L-serine = D-glyceraldehyde 3-phosphate + L-tryptophan + H2O. It participates in amino-acid biosynthesis; L-tryptophan biosynthesis; L-tryptophan from chorismate: step 5/5. Functionally, the alpha subunit is responsible for the aldol cleavage of indoleglycerol phosphate to indole and glyceraldehyde 3-phosphate. The polypeptide is Tryptophan synthase alpha chain (Chlorobium phaeobacteroides (strain DSM 266 / SMG 266 / 2430)).